The primary structure comprises 118 residues: Holo-[acyl-carrier-protein] synthase (118 aa).

Mg(2+) contacts are provided by Asp-5 and Glu-50.

Belongs to the P-Pant transferase superfamily. AcpS family. Mg(2+) is required as a cofactor.

The protein resides in the cytoplasm. The enzyme catalyses apo-[ACP] + CoA = holo-[ACP] + adenosine 3',5'-bisphosphate + H(+). Transfers the 4'-phosphopantetheine moiety from coenzyme A to a Ser of acyl-carrier-protein. In Aliarcobacter butzleri (strain RM4018) (Arcobacter butzleri), this protein is Holo-[acyl-carrier-protein] synthase.